The following is a 663-amino-acid chain: Chaperone protein HtpG (663 aa).

The tract at residues 1–352 is a; substrate-binding; it reads MTKQTLSFQA…SADLPLNVSR (352 aa). Residues 218 to 228 show a composition bias toward basic and acidic residues; sequence ELINPSDEKGG. Residues 218–237 are disordered; it reads ELINPSDEKGGRQPGGMVKT. A b region spans residues 353–595; that stretch reads ELLQESRDVK…DHGMSTQLAR (243 aa). The segment at 596 to 663 is c; sequence MLKQAGQAAP…YVKRVNALLV (68 aa).

This sequence belongs to the heat shock protein 90 family. Homodimer.

Its subcellular location is the cytoplasm. Molecular chaperone. Has ATPase activity. This chain is Chaperone protein HtpG, found in Albidiferax ferrireducens (strain ATCC BAA-621 / DSM 15236 / T118) (Rhodoferax ferrireducens).